The following is a 62-amino-acid chain: Potassium channel toxin alpha-KTx 6.21 (62 aa).

The N-terminal stretch at 1–24 (MNAKLIYLLLVVTTMMLTFDTTQA) is a signal peptide. Disulfide bonds link cysteine 29/cysteine 50, cysteine 35/cysteine 55, cysteine 39/cysteine 57, and cysteine 45/cysteine 60. Position 61 is a valine amide (valine 61).

This sequence belongs to the short scorpion toxin superfamily. Potassium channel inhibitor family. Alpha-KTx 06 subfamily. Post-translationally, C-terminal amidation is important for activity. There is a 50-70-fold decrease in ability to inhibit Kv1.2/KCNA2 when the toxin is not amidated. This decrease may be explained by a 23-fold slower association rate (k(on)) together with a 2-fold faster dissociation rate (k(off)). As to expression, expressed by the venom gland.

Its subcellular location is the secreted. In terms of biological role, reversible blocker of voltage-gated potassium channels with fast binding and unbinding kinetics. Has highest activity on human voltage-gated potassium channel Kv1.2/KCNA2 channels (IC(50)=0.11-0.16 nM), whereas its affinity for other channels tested was in the nanomolar range (hKv1.1/KCNA1, IC(50)=253 nM; hKv1.3/KCNA3, IC(50)=91 nM; and hKCa3.1/KCNN4, IC(50)=70 nM). This chain is Potassium channel toxin alpha-KTx 6.21, found in Urodacus yaschenkoi (Inland robust scorpion).